The following is a 354-amino-acid chain: Arginase-2, mitochondrial (354 aa).

The transit peptide at 1-22 (MFLRSSVSRLLHGQIPCALTRS) directs the protein to the mitochondrion. The Mn(2+) site is built by His-120, Asp-143, His-145, and Asp-147. Substrate is bound by residues 145-149 (HADIN), 156-158 (SGN), and Glu-202. Mn(2+) contacts are provided by Asp-251 and Asp-253. Thr-265 and Glu-296 together coordinate substrate.

This sequence belongs to the arginase family. As to quaternary structure, homotrimer. The cofactor is Mn(2+).

Its subcellular location is the mitochondrion. The enzyme catalyses L-arginine + H2O = urea + L-ornithine. Its pathway is nitrogen metabolism; urea cycle; L-ornithine and urea from L-arginine: step 1/1. In terms of biological role, may play a role in the regulation of extra-urea cycle arginine metabolism and also in down-regulation of nitric oxide synthesis. Extrahepatic arginase functions to regulate L-arginine bioavailability to nitric oxid synthase (NOS). Arginine metabolism is a critical regulator of innate and adaptive immune responses. Seems to be involved in negative regulation of the survival capacity of activated T cells. May suppress inflammation-related signaling in asthmatic airway epithelium. May play a role in promoting prenatal immune suppression. Regulates RPS6KB1 signaling, which promotes endothelial cell senescence and inflammation and implicates NOS3/eNOS dysfunction. Can inhibit endothelial autophagy independently of its enzymatic activity implicating mTORC2 signaling. Involved in vascular smooth muscle cell senescence and apoptosis independently of its enzymatic activity. The polypeptide is Arginase-2, mitochondrial (Arg2) (Rattus norvegicus (Rat)).